Reading from the N-terminus, the 737-residue chain is MQPRRAQAPGAQLLPALALLLLLLGAGPRGSSLANPVPAAPLSAPGPCAAQPCRNGGVCTSRPEPDPQHPAPAGEPGYSCTCPAGISGANCQLVADPCASNPCHHGNCSSSSSSSSDGYLCICNEGYEGPNCEQALPSLPATGWTESMAPRQLQPVPATQEPDKILPRSQATVTLPTWQPKTGQKVVEMKWDQVEVIPDIACGNASSNSSAGGRLVSFEVPQNTSVKIRQDATASLILLWKVTATGFQQCSLIDGRSVTPLQASGGLVLLEEMLALGNNHFIGFVNDSVTKSIVALRLTLVVKVSTCVPGESHANDLECSGKGKCTTKPSEATFSCTCEEQYVGTFCEEYDACQRKPCQNNASCIDANEKQDGSNFTCVCLPGYTGELCQSKIDYCILDPCRNGATCISSLSGFTCQCPEGYFGSACEEKVDPCASSPCQNNGTCYVDGVHFTCNCSPGFTGPTCAQLIDFCALSPCAHGTCRSVGTSYKCLCDPGYHGLYCEEEYNECLSAPCLNAATCRDLVNGYECVCLAEYKGTHCELYKDPCANVSCLNGATCDSDGLNGTCICAPGFTGEECDIDINECDSNPCHHGGSCLDQPNGYNCHCPHGWVGANCEIHLQWKSGHMAESLTNMPRHSLYIIIGALCVAFILMLIILIVGICRISRIEYQGSSRPAYEEFYNCRSIDSEFSNAIASIRHARFGKKSRPAMYDVSPIAYEDYSPDDKPLVTLIKTKDL.

An N-terminal signal peptide occupies residues 1-34; sequence MQPRRAQAPGAQLLPALALLLLLLGAGPRGSSLA. Over 35-640 the chain is Extracellular; it reads NPVPAAPLSA…LTNMPRHSLY (606 aa). 2 consecutive EGF-like domains span residues 44–92 and 94–133; these read APGP…ANCQ and VADP…PNCE. Residues 44–133 form an interaction with NOTCH1 region; the sequence is APGPCAAQPC…NEGYEGPNCE (90 aa). Cystine bridges form between C48-C59, C53-C80, C82-C91, C98-C108, C103-C121, and C123-C132. N-linked (GlcNAc...) asparagine glycosylation occurs at N223. 5 consecutive EGF-like domains span residues 309 to 348, 349 to 390, 392 to 428, 430 to 466, and 468 to 503; these read PGES…TFCE, EYDA…ELCQ, KIDY…SACE, KVDP…PTCA, and LIDF…LYCE. Disulfide bonds link C319–C336, C338–C347, C353–C364, C358–C378, C380–C389, C396–C407, C401–C416, C418–C427, C434–C445, C439–C454, C456–C465, C472–C482, C477–C491, C493–C502, C509–C520, C514–C529, C531–C540, C547–C558, C552–C567, C569–C578, C585–C596, C590–C605, and C607–C616. An EGF-like 8; calcium-binding domain is found at 505-541; that stretch reads EYNECLSAPCLNAATCRDLVNGYECVCLAEYKGTHCE. In terms of domain architecture, EGF-like 9 spans 543–579; the sequence is YKDPCANVSCLNGATCDSDGLNGTCICAPGFTGEECD. The Follistatin-like domain occupies 546 to 568; it reads PCANVSCLNGATCDSDGLNGTCI. The N-linked (GlcNAc...) asparagine glycan is linked to N564. The region spanning 581 to 617 is the EGF-like 10; calcium-binding domain; that stretch reads DINECDSNPCHHGGSCLDQPNGYNCHCPHGWVGANCE. Residues 641-661 form a helical membrane-spanning segment; that stretch reads IIIGALCVAFILMLIILIVGI. The Cytoplasmic segment spans residues 662-737; it reads CRISRIEYQG…LVTLIKTKDL (76 aa). The interaction with AP1G1 and somatodendritic targeting stretch occupies residues 677 to 680; it reads YEEF. S685 is subject to Phosphoserine. Phosphotyrosine is present on residues Y711 and Y721. S722 is subject to Phosphoserine.

In terms of assembly, interacts with AP1G1. Interacts with NOTCH1. Expressed in brain, spinal cord and adrenal gland.

The protein localises to the cell membrane. Activator of the NOTCH1 pathway. May mediate neuron-glia interaction during astrocytogenesis. The polypeptide is Delta and Notch-like epidermal growth factor-related receptor (DNER) (Homo sapiens (Human)).